The following is a 1721-amino-acid chain: Intersectin-1 (1721 aa).

One can recognise an EH 1 domain in the interval 21-109 (ERAKHDQQFH…PVMKQQPVAI (89 aa)). Residues 53 to 88 (LPQPVLAQIWALADMNNDGRMDQVEFSIAMKLIKLK) form the EF-hand 1 domain. Positions 66, 68, 70, 72, and 77 each coordinate Ca(2+). Ser203 carries the phosphoserine modification. The EH 2 domain occupies 221-310 (SRLKYRQLFN…PEYIPPSFRR (90 aa)). The region spanning 254–289 (LPQAQLASIWNLSDIDQDGKLTAEEFILAMHLIDVA) is the EF-hand 2 domain. Ca(2+) contacts are provided by Asp267, Asp269, Asp271, Lys273, and Glu278. Position 318 is a phosphoserine (Ser318). Disordered stretches follow at residues 322 to 348 (STSVDQRLPEEPVLEDEQQQLEKKLPV) and 650 to 701 (QRRA…KQEA). The tract at residues 326–702 (DQRLPEEPVL…GEEKGKQEAQ (377 aa)) is KLERQ. The stretch at 355–659 (RENFERGNLE…QRRAQERDKQ (305 aa)) forms a coiled coil. Ser687 carries the post-translational modification Phosphoserine. One can recognise an SH3 1 domain in the interval 740–806 (VKVVYYRALY…PANYAEKIPE (67 aa)). The interval 836-868 (LAVTSSEPSTTPNNWADFSSTWPTSTNEKPETD) is disordered. Polar residues predominate over residues 838–862 (VTSSEPSTTPNNWADFSSTWPTSTN). At Thr897 the chain carries Phosphothreonine. A phosphoserine mark is found at Ser901, Ser902, and Ser904. The SH3 2 domain occupies 913 to 971 (VEGLQAQALYPWRAKKDNHLNFNKNDVITVLEQQDMWWFGEVQGQKGWFPKSYVKLISG). Ser978, Ser986, and Ser995 each carry phosphoserine. SH3 domains are found at residues 1002–1060 (VSGE…LKDS) and 1074–1138 (KKPE…LLSP). The tract at residues 1074 to 1138 (KKPEIAQVIA…PANYVKLLSP (65 aa)) is required for interaction with FCHSD2. Residues 1104–1127 (RKKNPGGWWEGELQARGKKRQIGW) carry the Bipartite nuclear localization signal; in isoform 2 motif. The residue at position 1137 (Ser1137) is a Phosphoserine. Position 1144 is a phosphothreonine (Thr1144). Residues 1155–1214 (AAVCQVIGMYDYTAQNDDELAFNKGQIINVLNKEDPDWWKGEVNGQVGLFPSNYVKLTTD) form the SH3 5 domain. Residues 1237–1423 (KRQGYIHELI…EELCSQVNEG (187 aa)) enclose the DH domain. The PH domain maps to 1462–1571 (KFLHSGKLYK…WVQKIKAASE (110 aa)). One can recognise a C2 domain in the interval 1579–1695 (KKREKAYLVR…KKDQGSKGPV (117 aa)). Residue Ser1645 is modified to Phosphoserine. Ca(2+)-binding residues include Asp1667, Ser1670, and Asp1673.

As to quaternary structure, interacts (via DH domain) with CDC42. Interacts (via SH3 domain 1) with WASL. Interacts with dynamin, SNAP25 and SNAP23. Interacts with clathrin-associated proteins and other components of the endocytic machinery, such as SPIN90, EPS15, EPN1, EPN2, STON2, FCHO1, FCHO2 and DAB2. Interacts (via SH3 domains) with REPS1 and SGIP1. Interacts with ARHGAP31. Interacts with ADAM15. Interacts with PRRT2. Interacts (via SH3 domain 4) with FCHSD2 (via SH3 domain 2). Interacts (via SH3 domain 1) with DENND2B. Interacts (via SH3 domains) with CBL. Isoform 2: Interacts with CBL and DNM1. Isoform 2: Interacts with LMNA. Isoform 2: Interacts with importin subunit KPNA1; this is likely to mediate its import into the nucleus. Interacts with DNM2. In terms of assembly, (Microbial infection) Interacts with vaccinia virus protein A36. Requires Ca(2+) as cofactor. Isoform 1 is expressed almost exclusively in the brain. Isoform 2 is detected in brain, spleen, lung, liver, heart, skeletal muscle and kidney. Isoform 5 is primarily expressed in brain, spleen, lung and kidney (at protein level). Isoform 1 and isoform 2 are detected in brain. Isoform 2 is ubiquitous in adult and fetal tissues with high expression in skeletal muscle, heart, spleen, ovary, testis and all fetal tissues tested and low expression in thymus, blood, lung, liver and pancreas. Isoform 1 is expressed almost exclusively in the brain, in all brain regions. Not expressed in the spinal cord.

It is found in the endomembrane system. Its subcellular location is the synapse. It localises to the synaptosome. The protein localises to the cell projection. The protein resides in the lamellipodium. It is found in the cell membrane. Its subcellular location is the membrane. It localises to the clathrin-coated pit. The protein localises to the recycling endosome. The protein resides in the endosome. It is found in the cytoplasmic vesicle. Its subcellular location is the cytoplasm. It localises to the nucleus envelope. Adapter protein that provides a link between the endocytic membrane traffic and the actin assembly machinery. Acts as a guanine nucleotide exchange factor (GEF) for CDC42, and thereby stimulates actin nucleation mediated by WASL and the ARP2/3 complex. Plays a role in the assembly and maturation of clathrin-coated vesicles. Recruits FCHSD2 to clathrin-coated pits. Involved in endocytosis of activated EGFR, and probably also other growth factor receptors. Involved in endocytosis of integrin beta-1 (ITGB1) and transferrin receptor (TFR); internalization of ITGB1 as DAB2-dependent cargo but not TFR may involve association with DAB2. Promotes ubiquitination and subsequent degradation of EGFR, and thereby contributes to the down-regulation of EGFR-dependent signaling pathways. In chromaffin cells, required for normal exocytosis of catecholamines. Required for rapid replenishment of release-ready synaptic vesicles at presynaptic active zones. Inhibits ARHGAP31 activity toward RAC1. In terms of biological role, plays a role in synaptic vesicle endocytosis in brain neurons. The protein is Intersectin-1 of Homo sapiens (Human).